The chain runs to 478 residues: JmjC domain-containing histone demethylation protein 1 (478 aa).

The segment at 6–70 adopts a PHD-type zinc-finger fold; that stretch reads VKCHFCKKDD…HVESFKCTLH (65 aa). The region spanning 242-401 is the JmjC domain; that stretch reads SHVESFKDGI…TQLNVVEIEH (160 aa). Substrate is bound at residue Thr-294. 2 residues coordinate Fe cation: His-297 and Asp-299. Lys-314 contributes to the substrate binding site. His-369 is a binding site for Fe cation.

Belongs to the JHDM1 histone demethylase family. Requires Fe(2+) as cofactor.

The protein localises to the nucleus. The enzyme catalyses N(6),N(6)-dimethyl-L-lysyl(36)-[histone H3] + 2 2-oxoglutarate + 2 O2 = L-lysyl(36)-[histone H3] + 2 formaldehyde + 2 succinate + 2 CO2. In terms of biological role, histone demethylase that specifically demethylates 'Lys-36' of histone H3, thereby playing a central role in histone code. This Kluyveromyces lactis (strain ATCC 8585 / CBS 2359 / DSM 70799 / NBRC 1267 / NRRL Y-1140 / WM37) (Yeast) protein is JmjC domain-containing histone demethylation protein 1 (JHD1).